A 474-amino-acid polypeptide reads, in one-letter code: MAQLEGYYFSAALSCTFLVSCLLFSAFSRALREPYMDEIFHLPQAQRYCEGRFSLSQWDPMITTLPGLYLVSVGVVKPASWLLGWSEHVICSIGVLRFVNLLFSVGNFYLLYLLFRKVQPRNKASSSIQRILSTLTLAVFPTLYFFNFLYYTEAGSVFFTLFAYLMCLYGNHRTSALLGFCGFMFRQTNIIWAAFCAGHLIAQKCSEAWKIELQKKKEERLAPTKGPLSELRRVLQFLLVYAMSLKNLRMLFLLTWPYVLLLLAFFAFVVVNGGIVVGDRSSHEACLHFPQLFYFFSFTAFFSFPHLLSLTKVKTFLSLVWKRRVQFSVVTLVSILLVWKFTYVHKYLLADNRHYTFYVWKRVFQRHEVVKYLLVPAYIFAGWAIADSLKAKSIFWNLMFFVCLVASTVPQKLLEFRYFILPYIIYRLNIPLPPISRLVCELGCYTVVNFVTFYIFLNKTFQWPNSQDIQRFMW.

The Cytoplasmic portion of the chain corresponds to 1-6 (MAQLEG). Residues 7–27 (YYFSAALSCTFLVSCLLFSAF) form a helical membrane-spanning segment. The Extracellular segment spans residues 28-64 (SRALREPYMDEIFHLPQAQRYCEGRFSLSQWDPMITT). The helical transmembrane segment at 65–85 (LPGLYLVSVGVVKPASWLLGW) threads the bilayer. Residues 86–97 (SEHVICSIGVLR) lie on the Cytoplasmic side of the membrane. A helical membrane pass occupies residues 98–118 (FVNLLFSVGNFYLLYLLFRKV). The Extracellular segment spans residues 119–126 (QPRNKASS). A helical membrane pass occupies residues 127 to 147 (SIQRILSTLTLAVFPTLYFFN). Over 148–150 (FLY) the chain is Cytoplasmic. Residues 151–171 (YTEAGSVFFTLFAYLMCLYGN) form a helical membrane-spanning segment. Residues 172–175 (HRTS) are Extracellular-facing. The helical transmembrane segment at 176–196 (ALLGFCGFMFRQTNIIWAAFC) threads the bilayer. Residues 197-256 (AGHLIAQKCSEAWKIELQKKKEERLAPTKGPLSELRRVLQFLLVYAMSLKNLRMLFLLTW) are Cytoplasmic-facing. A helical transmembrane segment spans residues 257–277 (PYVLLLLAFFAFVVVNGGIVV). Topologically, residues 278 to 283 (GDRSSH) are extracellular. Residues 284-304 (EACLHFPQLFYFFSFTAFFSF) traverse the membrane as a helical segment. Topologically, residues 305–317 (PHLLSLTKVKTFL) are cytoplasmic. Residues 318 to 338 (SLVWKRRVQFSVVTLVSILLV) traverse the membrane as a helical segment. Topologically, residues 339 to 365 (WKFTYVHKYLLADNRHYTFYVWKRVFQ) are extracellular. The chain crosses the membrane as a helical span at residues 366 to 386 (RHEVVKYLLVPAYIFAGWAIA). Residues 387–392 (DSLKAK) lie on the Cytoplasmic side of the membrane. Residues 393 to 413 (SIFWNLMFFVCLVASTVPQKL) form a helical membrane-spanning segment. Topologically, residues 414 to 436 (LEFRYFILPYIIYRLNIPLPPIS) are extracellular. A helical transmembrane segment spans residues 437-457 (RLVCELGCYTVVNFVTFYIFL). Residues 458 to 473 (NKTFQWPNSQDIQRFM) lie on the Cytoplasmic side of the membrane.

Belongs to the ALG10 glucosyltransferase family. In terms of assembly, interacts with KCNH1; may regulate KCNH1, possibly by regulating its N-glycosylation. Interacts with KCNH2; may reduce KCNH2 sensitivity to classic proarrhythmic drug blockade, possibly by regulating its N-glycosylation.

Its subcellular location is the endoplasmic reticulum membrane. It catalyses the reaction an alpha-D-Glc-(1-&gt;3)-alpha-D-Glc-(1-&gt;3)-alpha-D-Man-(1-&gt;2)-alpha-D-Man-(1-&gt;2)-alpha-D-Man-(1-&gt;3)-[alpha-D-Man-(1-&gt;2)-alpha-D-Man-(1-&gt;3)-[alpha-D-Man-(1-&gt;2)-alpha-D-Man-(1-&gt;6)]-alpha-D-Man-(1-&gt;6)]-beta-D-Man-(1-&gt;4)-beta-D-GlcNAc-(1-&gt;4)-alpha-D-GlcNAc-diphospho-di-trans,poly-cis-dolichol + a di-trans,poly-cis-dolichyl beta-D-glucosyl phosphate = a alpha-D-Glc-(1-&gt;2)-alpha-D-Glc-(1-&gt;3)-alpha-D-Glc-(1-&gt;3)-alpha-D-Man-(1-&gt;2)-alpha-D-Man-(1-&gt;2)-alpha-D-Man-(1-&gt;3)-[alpha-D-Man-(1-&gt;2)-alpha-D-Man-(1-&gt;3)-[alpha-D-Man-(1-&gt;2)-alpha-D-Man-(1-&gt;6)]-alpha-D-Man-(1-&gt;6)]-beta-D-Man-(1-&gt;4)-beta-D-GlcNAc-(1-&gt;4)-alpha-D-GlcNAc-diphospho-di-trans,poly-cis-dolichol + a di-trans,poly-cis-dolichyl phosphate + H(+). Its pathway is protein modification; protein glycosylation. Dol-P-Glc:Glc(2)Man(9)GlcNAc(2)-PP-Dol alpha-1,2-glucosyltransferase that operates in the biosynthetic pathway of dolichol-linked oligosaccharides, the glycan precursors employed in protein asparagine (N)-glycosylation. The assembly of dolichol-linked oligosaccharides begins on the cytosolic side of the endoplasmic reticulum membrane and finishes in its lumen. The sequential addition of sugars to dolichol pyrophosphate produces dolichol-linked oligosaccharides containing fourteen sugars, including two GlcNAcs, nine mannoses and three glucoses. Once assembled, the oligosaccharide is transferred from the lipid to nascent proteins by oligosaccharyltransferases. In the lumen of the endoplasmic reticulum, adds the third and last glucose residue from dolichyl phosphate glucose (Dol-P-Glc) onto the lipid-linked oligosaccharide intermediate Glc(2)Man(9)GlcNAc(2)-PP-Dol to produce Glc(3)Man(9)GlcNAc(2)-PP-Dol. This is Dol-P-Glc:Glc(2)Man(9)GlcNAc(2)-PP-Dol alpha-1,2-glucosyltransferase from Mus musculus (Mouse).